A 192-amino-acid polypeptide reads, in one-letter code: BREX protein BrxB (192 aa).

This sequence belongs to the BrxB family.

BREX systems (bacteriophage exclusion) provide immunity against bacteriophage. Part of a type 1 BREX system. This system allows phage adsorption but prevents phage DNA replication, without degradation of the phage DNA. Methylation of bacterial DNA by PglX probably guides self/non-self discrimination. When the brxA-brxB-brxC-pglX and pglZ-brxL operons are transformed into a susceptible B.subtilis strain (BEST7003) they confer resistance to bacteriophages SPbeta, SP16, Zeta, phi3T and SP02 and partial protection to phages SP01 and SP82G (these include lytic and temperate phage). They do not protect against phages phi105, rho10 or rho14. Additionally confers a very slight reduction in efficiency of plasmid transformation. The chain is BREX protein BrxB from Bacillus cereus (strain H3081.97).